Here is a 229-residue protein sequence, read N- to C-terminus: uncharacterized protein (229 aa).

Positions 1–41 are disordered; sequence MRSAKVGVARQLETKKPQTGRKISTSSRGTIHSQQSQPEDI. A compositionally biased stretch (polar residues) spans 21-39; the sequence is RKISTSSRGTIHSQQSQPE. EF-hand domains follow at residues 48–83, 84–119, 123–158, and 159–193; these read KELK…IGLH, ANKA…SQNI, TNEE…FGDF, and DDEL…YLLN. Residues Asp-61, Asp-63, Ser-65, Glu-72, Asp-97, Asp-99, Asn-101, Glu-103, Glu-108, Asp-136, Asp-138, Asn-140, and Glu-147 each coordinate Ca(2+). Basic and acidic residues predominate over residues 194-217; sequence DPKHDIDTGDSDVERYDDRHDDRA. Residues 194 to 229 form a disordered region; it reads DPKHDIDTGDSDVERYDDRHDDRASPMPNHLSTVPE.

This is an uncharacterized protein from Caenorhabditis elegans.